A 163-amino-acid chain; its full sequence is Bacterial microcompartment assembly protein PduM (163 aa).

The protein belongs to the PduM family. In terms of assembly, interacts with shell protein PduK.

Its subcellular location is the bacterial microcompartment. Its pathway is polyol metabolism; 1,2-propanediol degradation. Functionally, plays an essential role in assembly and/or stability of the bacterial microcompartment (BMC) dedicated to 1,2-propanediol (1,2-PD) degradation. Expression of a cosmid containing the full 21-gene pdu operon in E.coli allows E.coli to grow on 1,2-propanediol (1,2-PD) with the appearance of bacterial microcompartments (BMC) in its cytoplasm. Its function is as follows. The 1,2-PD-specific bacterial microcompartment (BMC) concentrates low levels of 1,2-PD catabolic enzymes, concentrates volatile reaction intermediates thus enhancing pathway flux and keeps the level of toxic, mutagenic propionaldehyde low. This is Bacterial microcompartment assembly protein PduM from Citrobacter freundii.